A 106-amino-acid chain; its full sequence is Large ribosomal subunit protein uL24 (106 aa).

The protein belongs to the universal ribosomal protein uL24 family. As to quaternary structure, part of the 50S ribosomal subunit.

One of two assembly initiator proteins, it binds directly to the 5'-end of the 23S rRNA, where it nucleates assembly of the 50S subunit. In terms of biological role, one of the proteins that surrounds the polypeptide exit tunnel on the outside of the subunit. This chain is Large ribosomal subunit protein uL24, found in Blochmanniella floridana.